The sequence spans 398 residues: Acetylornithine aminotransferase (398 aa).

Residue Phe-129 coordinates pyridoxal 5'-phosphate. Position 132 (Arg-132) interacts with N(2)-acetyl-L-ornithine. 214-217 is a pyridoxal 5'-phosphate binding site; sequence DEVQ. The residue at position 243 (Lys-243) is an N6-(pyridoxal phosphate)lysine. Ser-271 is a N(2)-acetyl-L-ornithine binding site. Thr-272 serves as a coordination point for pyridoxal 5'-phosphate.

Belongs to the class-III pyridoxal-phosphate-dependent aminotransferase family. ArgD subfamily. In terms of assembly, homodimer. Pyridoxal 5'-phosphate serves as cofactor.

It localises to the cytoplasm. The enzyme catalyses N(2)-acetyl-L-ornithine + 2-oxoglutarate = N-acetyl-L-glutamate 5-semialdehyde + L-glutamate. The protein operates within amino-acid biosynthesis; L-arginine biosynthesis; N(2)-acetyl-L-ornithine from L-glutamate: step 4/4. The sequence is that of Acetylornithine aminotransferase from Neisseria meningitidis serogroup B (strain ATCC BAA-335 / MC58).